Here is a 312-residue protein sequence, read N- to C-terminus: Zygote arrest protein 1.L (312 aa).

Disordered stretches follow at residues 79-133 (RDVG…VRFP) and 150-205 (FQDK…DQTR). Polar residues-rich tracts occupy residues 86 to 95 (NPRQDASVQC) and 113 to 128 (PQQS…SPTK). The span at 152 to 196 (DKGENLSEKTEALRSEGSRGEGGRPEGKQEDGEIKEQTKMDKADQ) shows a compositional bias: basic and acidic residues. The segment at 214-297 (KYGYYHCKDC…RQDLCGRCKG (84 aa)) adopts a 3CxxC-type zinc-finger fold.

Belongs to the ZAR1 family. As to expression, ovary.

The protein resides in the cytoplasm. It localises to the cytoplasmic ribonucleoprotein granule. Functionally, mRNA-binding protein required for maternal mRNA storage, translation and degradation during oocyte maturation. Probably promotes formation of some phase-separated membraneless compartment that stores maternal mRNAs in oocytes: acts by undergoing liquid-liquid phase separation upon binding to maternal mRNAs. Binds to the 3'-UTR of maternal mRNAs in immature oocytes, inhibiting their translation. The sequence is that of Zygote arrest protein 1.L from Xenopus laevis (African clawed frog).